Consider the following 299-residue polypeptide: ATP phosphoribosyltransferase (299 aa).

It belongs to the ATP phosphoribosyltransferase family. Long subfamily. Mg(2+) is required as a cofactor.

The protein localises to the cytoplasm. The enzyme catalyses 1-(5-phospho-beta-D-ribosyl)-ATP + diphosphate = 5-phospho-alpha-D-ribose 1-diphosphate + ATP. Its pathway is amino-acid biosynthesis; L-histidine biosynthesis; L-histidine from 5-phospho-alpha-D-ribose 1-diphosphate: step 1/9. With respect to regulation, feedback inhibited by histidine. Functionally, catalyzes the condensation of ATP and 5-phosphoribose 1-diphosphate to form N'-(5'-phosphoribosyl)-ATP (PR-ATP). Has a crucial role in the pathway because the rate of histidine biosynthesis seems to be controlled primarily by regulation of HisG enzymatic activity. The polypeptide is ATP phosphoribosyltransferase (Shewanella baltica (strain OS155 / ATCC BAA-1091)).